A 187-amino-acid polypeptide reads, in one-letter code: uncharacterized protein (187 aa).

The Nudix hydrolase domain maps to 26–157 (NRHAAVLLPI…YLDVSRRGQQ (132 aa)). Residues 64-86 (GVADPKDKSIIATALREAEEEVN) carry the Nudix box motif. 2 residues coordinate Mg(2+): Glu80 and Glu84.

This sequence belongs to the Nudix hydrolase family. PCD1 subfamily. Mn(2+) is required as a cofactor. Mg(2+) serves as cofactor.

In terms of biological role, probably mediates the hydrolysis of some nucleoside diphosphate derivatives. This is an uncharacterized protein from Photorhabdus laumondii subsp. laumondii (strain DSM 15139 / CIP 105565 / TT01) (Photorhabdus luminescens subsp. laumondii).